The primary structure comprises 180 residues: Large ribosomal subunit protein uL10 (180 aa).

This sequence belongs to the universal ribosomal protein uL10 family. As to quaternary structure, part of the ribosomal stalk of the 50S ribosomal subunit. The N-terminus interacts with L11 and the large rRNA to form the base of the stalk. The C-terminus forms an elongated spine to which L12 dimers bind in a sequential fashion forming a multimeric L10(L12)X complex.

Its function is as follows. Forms part of the ribosomal stalk, playing a central role in the interaction of the ribosome with GTP-bound translation factors. In Thermosipho melanesiensis (strain DSM 12029 / CIP 104789 / BI429), this protein is Large ribosomal subunit protein uL10.